The sequence spans 379 residues: 3-dehydroquinate synthase (379 aa).

It belongs to the archaeal-type DHQ synthase family.

The catalysed reaction is 2-amino-2,3,7-trideoxy-D-lyxo-hept-6-ulosonate + NAD(+) + H2O = 3-dehydroquinate + NH4(+) + NADH + H(+). Functionally, catalyzes the oxidative deamination and cyclization of 2-amino-3,7-dideoxy-D-threo-hept-6-ulosonic acid (ADH) to yield 3-dehydroquinate (DHQ), which is fed into the canonical shikimic pathway of aromatic amino acid biosynthesis. The polypeptide is 3-dehydroquinate synthase (Methanococcoides burtonii (strain DSM 6242 / NBRC 107633 / OCM 468 / ACE-M)).